The primary structure comprises 393 residues: Pyridinium-3,5-bisthiocarboxylic acid mononucleotide nickel insertion protein (393 aa).

The protein belongs to the LarC family.

It carries out the reaction Ni(II)-pyridinium-3,5-bisthiocarboxylate mononucleotide = pyridinium-3,5-bisthiocarboxylate mononucleotide + Ni(2+). Involved in the biosynthesis of a nickel-pincer cofactor ((SCS)Ni(II) pincer complex). Binds Ni(2+), and functions in nickel delivery to pyridinium-3,5-bisthiocarboxylic acid mononucleotide (P2TMN), to form the mature cofactor. Is thus probably required for the activation of nickel-pincer cofactor-dependent enzymes. In Nocardioides sp. (strain ATCC BAA-499 / JS614), this protein is Pyridinium-3,5-bisthiocarboxylic acid mononucleotide nickel insertion protein.